A 241-amino-acid chain; its full sequence is MFFNSLLTNFAALEVGQHLYWQIGNIRLHGQVFLTSWILLGALLVFISLGTKKMENDPKGLQNLLEFLWDYIRDLARTQIGEKVYRDWMPFIGTLFLFVFVSNWGGALIPWRLIKLPSGELGAPTADINTTIALALLVSLSYFYAGLSNKGWRYFEYYVHPTPIMLPFKILEDFTKPLSLSFRLFGNILADELVVGVLVFLVPLILPIPVMFLGLFTSAIQALIFATLAAYYIGEAVEEHH.

Transmembrane regions (helical) follow at residues 30-50 (GQVF…ISLG), 91-111 (FIGT…LIPW), 128-148 (INTT…AGLS), 193-213 (LVVG…VMFL), and 214-234 (GLFT…YYIG).

It belongs to the ATPase A chain family. As to quaternary structure, F-type ATPases have 2 components, CF(1) - the catalytic core - and CF(0) - the membrane proton channel. CF(1) has five subunits: alpha(3), beta(3), gamma(1), delta(1), epsilon(1). CF(0) has four main subunits: a, b, b' and c.

The protein resides in the cellular thylakoid membrane. In terms of biological role, key component of the proton channel; it plays a direct role in the translocation of protons across the membrane. The protein is ATP synthase subunit a of Prochlorococcus marinus (strain MIT 9301).